Reading from the N-terminus, the 350-residue chain is C5a anaphylatoxin chemotactic receptor 1 (350 aa).

Residues 1 to 37 (MDSFDYTTPDYGHYDDKDTLDLNTPVDKTSNTLRVPD) are Extracellular-facing. The segment at 10–18 (DYGHYDDKD) is required for CHIPS binding. Sulfotyrosine occurs at positions 11 and 14. An involved in C5a binding region spans residues 21-30 (DLNTPVDKTS). A helical membrane pass occupies residues 38–64 (ILALVIFAVVFLVGVLGNALVVWVTAF). The Cytoplasmic segment spans residues 65–69 (EAKRT). The helical transmembrane segment at 70 to 93 (INAIWFLNLAVADFLSCLALPILF) threads the bilayer. The Extracellular portion of the chain corresponds to 94–110 (TSIVQHHHWPFGGAACS). Residues cysteine 109 and cysteine 188 are joined by a disulfide bond. A helical membrane pass occupies residues 111-132 (ILPSLILLNMYASILLLATISA). Topologically, residues 133–153 (DRFLLVFKPIWCQNFRGAGLA) are cytoplasmic. A helical membrane pass occupies residues 154–174 (WIACAVAWGLALLLTIPSFLY). The Extracellular segment spans residues 175-200 (RVVREEYFPPKVLCGVDYSHDKRRER). Residues 201-226 (AVAIVRLVLGFLWPLLTLMICYTFIL) traverse the membrane as a helical segment. Residues 227-242 (LRTWSRRATRSTKTLK) are Cytoplasmic-facing. A helical membrane pass occupies residues 243–265 (VVVAVVASFFIFWLPYQVTGIMM). Topologically, residues 266–282 (SFLEPSSPTFRLLKKLD) are extracellular. The chain crosses the membrane as a helical span at residues 283–303 (SLCVSFAYINCCINPIIYVVA). Residues 304–350 (GQGFQGRLQKSLPSLLRNVLTEESVVRESKSFARSTVDTMADKTQAV) lie on the Cytoplasmic side of the membrane. Serine 314, serine 317, serine 327, serine 332, serine 334, and serine 338 each carry phosphoserine.

This sequence belongs to the G-protein coupled receptor 1 family. Homodimer. May also form higher-order oligomers. Interacts (when phosphorylated) with ARRB1 and ARRB2; the interaction is associated with internalization of C5aR. Interacts (via N-terminal domain) with S.aureus chemotaxis inhibitory protein (CHIPS); the interaction blocks the receptor and may thus inhibit the immune response. In terms of processing, sulfation plays a critical role in the association of C5aR with C5a, but no significant role in the ability of the receptor to transduce a signal and mobilize calcium in response to a small peptide agonist. Sulfation at Tyr-14 is important for CHIPS binding. Phosphorylated on serine residues in response to C5a binding, resulting in internalization of the receptor and short-term desensitization to C5a.

It is found in the cell membrane. It localises to the cytoplasmic vesicle. Its function is as follows. Receptor for the chemotactic and inflammatory peptide anaphylatoxin C5a. The ligand interacts with at least two sites on the receptor: a high-affinity site on the extracellular N-terminus, and a second site in the transmembrane region which activates downstream signaling events. Receptor activation stimulates chemotaxis, granule enzyme release, intracellular calcium release and superoxide anion production. This is C5a anaphylatoxin chemotactic receptor 1 (C5AR1) from Pan troglodytes (Chimpanzee).